We begin with the raw amino-acid sequence, 337 residues long: Glucokinase (337 aa).

Ala-11 to Thr-16 contributes to the ATP binding site.

This sequence belongs to the bacterial glucokinase family.

It is found in the cytoplasm. It carries out the reaction D-glucose + ATP = D-glucose 6-phosphate + ADP + H(+). The sequence is that of Glucokinase from Xylella fastidiosa (strain M23).